Here is a 292-residue protein sequence, read N- to C-terminus: T-box transcription factor tbx-9 (292 aa).

The segment at residues 10–194 (GSQETLWKIF…HNSFAKGFRD (185 aa)) is a DNA-binding region (T-box). 2 disordered regions span residues 192-227 (FRDG…EVAP) and 265-292 (STPS…DIVG). 2 stretches are compositionally biased toward low complexity: residues 204 to 223 (PSYS…RSPP) and 265 to 275 (STPSSSSSELS). The segment covering 280–292 (EDQEVEEDIDIVG) has biased composition (acidic residues).

The protein resides in the nucleus. Its function is as follows. Transcription factor. Involved in the control of early morphogenesis of the intestine, hypodermis and body-wall muscle. Involved in regulating expression of vab-7. Appears to have partially redundant function to tbx-8. Positively modulates expression of homeobox protein lin-39, perhaps by binding to regulatory regions of the lin-39 gene, acting in the vulval lineage. The polypeptide is T-box transcription factor tbx-9 (tbx-9) (Caenorhabditis elegans).